The chain runs to 281 residues: uncharacterized protein (281 aa).

The segment at 1-30 is disordered; it reads MVQIQFHQGEPLGHKKEKPPPVSPPSPPPI. The span at 20-30 shows a compositional bias: pro residues; the sequence is PPVSPPSPPPI. The next 7 membrane-spanning stretches (helical) occupy residues 58–78, 88–107, 117–137, 145–165, 171–191, 196–216, and 248–268; these read TVVF…LIPW, TLPF…AYWL, MLVM…GLCF, AYVL…LMAW, LAIL…IAVQ, YQRI…IVLI, and VIMF…PNYA.

The protein belongs to the cytomegalovirus US12 family.

The protein resides in the host membrane. This is an uncharacterized protein from Homo sapiens (Human).